Reading from the N-terminus, the 90-residue chain is Large ribosomal subunit protein eL31 (90 aa).

This sequence belongs to the eukaryotic ribosomal protein eL31 family.

The sequence is that of Large ribosomal subunit protein eL31 from Thermococcus gammatolerans (strain DSM 15229 / JCM 11827 / EJ3).